The sequence spans 137 residues: NADH-quinone oxidoreductase subunit A (137 aa).

Transmembrane regions (helical) follow at residues 12 to 32 (WAFA…LGVS), 68 to 88 (LVAM…AWAV), and 94 to 114 (GWVG…GLVY).

Belongs to the complex I subunit 3 family. In terms of assembly, NDH-1 is composed of 13 different subunits. Subunits NuoA, H, J, K, L, M, N constitute the membrane sector of the complex.

It is found in the cell inner membrane. It carries out the reaction a quinone + NADH + 5 H(+)(in) = a quinol + NAD(+) + 4 H(+)(out). Functionally, NDH-1 shuttles electrons from NADH, via FMN and iron-sulfur (Fe-S) centers, to quinones in the respiratory chain. The immediate electron acceptor for the enzyme in this species is believed to be ubiquinone. Couples the redox reaction to proton translocation (for every two electrons transferred, four hydrogen ions are translocated across the cytoplasmic membrane), and thus conserves the redox energy in a proton gradient. This chain is NADH-quinone oxidoreductase subunit A, found in Ectopseudomonas mendocina (strain ymp) (Pseudomonas mendocina).